Reading from the N-terminus, the 119-residue chain is DNA-binding protein inhibitor ID-3 (119 aa).

The 53-residue stretch at 28 to 80 (RGKSPSTEEPLSLLDDMNHCYSRLRELVPGVPRGTQLSQVEILQRVIDYILDL) folds into the bHLH domain. Positions 35 to 87 (EEPLSLLDDMNHCYSRLRELVPGVPRGTQLSQVEILQRVIDYILDLQVVLAEP) are interaction with IFI204.

As to quaternary structure, homodimer, and heterodimer with other HLH proteins. Interacts with CLOCK and BMAL1. Interacts with COPS5 and COPS7A. Interacts with IFI204. Interacts with GATA4 and NKX2-5. Interacts with ANKRD2; both proteins cooperate in myoblast differentiation. Post-translationally, polyubiquitinated; which is favored by Ifi204 and leads to proteasomal degradation. As to expression, expressed by myoblasts (at protein level).

It localises to the nucleus. The protein resides in the cytoplasm. Its function is as follows. Transcriptional regulator (lacking a basic DNA binding domain) which negatively regulates the basic helix-loop-helix (bHLH) transcription factors by forming heterodimers and inhibiting their DNA binding and transcriptional activity. Implicated in regulating a variety of cellular processes, including cellular growth, senescence, differentiation, apoptosis, angiogenesis, and neoplastic transformation. Involved in myogenesis by inhibiting skeletal muscle and cardiac myocyte differentiation and promoting muscle precursor cells proliferation. Inhibits the binding of E2A-containing protein complexes to muscle creatine kinase E-box enhancer. Regulates the circadian clock by repressing the transcriptional activator activity of the CLOCK-BMAL1 heterodimer. The polypeptide is DNA-binding protein inhibitor ID-3 (Id3) (Mus musculus (Mouse)).